A 194-amino-acid polypeptide reads, in one-letter code: Potassium-transporting ATPase KdpC subunit (194 aa).

The chain crosses the membrane as a helical span at residues 12-34 (LFLLLLTGGVYPLLTTALGQWWF).

This sequence belongs to the KdpC family. In terms of assembly, the system is composed of three essential subunits: KdpA, KdpB and KdpC.

Its subcellular location is the cell inner membrane. In terms of biological role, part of the high-affinity ATP-driven potassium transport (or Kdp) system, which catalyzes the hydrolysis of ATP coupled with the electrogenic transport of potassium into the cytoplasm. This subunit acts as a catalytic chaperone that increases the ATP-binding affinity of the ATP-hydrolyzing subunit KdpB by the formation of a transient KdpB/KdpC/ATP ternary complex. This chain is Potassium-transporting ATPase KdpC subunit, found in Salmonella schwarzengrund (strain CVM19633).